A 1030-amino-acid polypeptide reads, in one-letter code: MMS19 nucleotide excision repair protein homolog (1030 aa).

Ala2 bears the N-acetylalanine mark. 4 HEAT repeats span residues 866-904 (QRFFTDNVPALVRGFHAAPQDVKPNYLKGLSHVLNRLPK), 908-946 (LPELPTLLSLLLEALSCPDSVVQLSTLSCLQPLLLEAPQ), 949-987 (SLHVDTLITKFLNLSASPSMAVRIAALQCMHALTRLPTP), and 990-1028 (LPYKPQVIRALAKPLDDKKRLVRKEAVSARGEWFLLGSP). Phosphoserine is present on Ser1027.

The protein belongs to the MET18/MMS19 family. As to quaternary structure, component of the CIA complex. In the CIA complex, interacts directly with CIAO2B and CIAO3. Component of the MMXD complex, composed of CIAO1, ERCC2, CIAO2B, MMS19 and SLC25A5. Interacts with CIAO2B; the interaction is direct. Interacts with ERCC2/XPD; the interaction is direct. Interacts with ERCC3/XPB and NCOA3/RAC3. Interacts with RTEL1; the interaction mediates the association of RTEL1 with the CIA complex. Interacts with BRIP1. Interacts with KIF4A; the interaction facilitates the transfer of Fe-S clusters to KIF4A to ensure proper localization of KIF4A to the mitotic machinery components. Interacts with CCDC117; the interaction is indirect. In terms of processing, ubiquitinated; undergoes 'Lys-48'-linked polyubiquitination.

It localises to the nucleus. The protein resides in the cytoplasm. It is found in the cytoskeleton. The protein localises to the spindle. In terms of biological role, key component of the cytosolic iron-sulfur protein assembly (CIA) complex, a multiprotein complex that mediates the incorporation of iron-sulfur cluster into apoproteins specifically involved in DNA metabolism and genomic integrity. In the CIA complex, MMS19 acts as an adapter between early-acting CIA components and a subset of cellular target Fe/S proteins such as ERCC2/XPD, FANCJ and RTEL1, thereby playing a key role in nucleotide excision repair (NER), homologous recombination-mediated double-strand break DNA repair, DNA replication and RNA polymerase II (POL II) transcription. As a CIA complex component and in collaboration with CIAO1 and CIAO2, binds to and facilitates the assembly of most cytosolic-nuclear Fe/S proteins. As part of the mitotic spindle-associated MMXD complex, plays a role in chromosome segregation, probably by facilitating iron-sulfur cluster assembly into ERCC2/XPD. Together with CIAO2, facilitates the transfer of Fe-S clusters to the motor protein KIF4A, which ensures proper localization of KIF4A to mitotic machinery components to promote the progression of mitosis. Indirectly acts as a transcriptional coactivator of estrogen receptor (ER), via its role in iron-sulfur insertion into some component of the TFIIH-machinery. The protein is MMS19 nucleotide excision repair protein homolog of Bos taurus (Bovine).